The primary structure comprises 427 residues: Serine hydroxymethyltransferase (427 aa).

(6S)-5,6,7,8-tetrahydrofolate contacts are provided by residues Leu-124 and 128 to 130 (GHL). N6-(pyridoxal phosphate)lysine is present on Lys-233.

This sequence belongs to the SHMT family. As to quaternary structure, homodimer. The cofactor is pyridoxal 5'-phosphate.

It localises to the cytoplasm. The catalysed reaction is (6R)-5,10-methylene-5,6,7,8-tetrahydrofolate + glycine + H2O = (6S)-5,6,7,8-tetrahydrofolate + L-serine. It functions in the pathway one-carbon metabolism; tetrahydrofolate interconversion. The protein operates within amino-acid biosynthesis; glycine biosynthesis; glycine from L-serine: step 1/1. Functionally, catalyzes the reversible interconversion of serine and glycine with tetrahydrofolate (THF) serving as the one-carbon carrier. This reaction serves as the major source of one-carbon groups required for the biosynthesis of purines, thymidylate, methionine, and other important biomolecules. Also exhibits THF-independent aldolase activity toward beta-hydroxyamino acids, producing glycine and aldehydes, via a retro-aldol mechanism. The polypeptide is Serine hydroxymethyltransferase (Acidothermus cellulolyticus (strain ATCC 43068 / DSM 8971 / 11B)).